Reading from the N-terminus, the 23-residue chain is GLKEIFKAGLGSLVKGIAAHVAS.

Serine amide is present on Ser-23.

Expressed by the skin glands.

The protein resides in the secreted. It localises to the target cell membrane. In terms of biological role, antibacterial peptide with amphipathic alpha-helical structure that shows selective growth-inhibitory activity against Gram-negative bacteria but low hemolytic activity against human erythrocytes (LC(50)=145-220 uM). It is moderately active against the Gram-negative bacteria E.coli (MIC=25 uM), K.pneumoniae (MIC=50 uM), P.aeruginosa (MIC=25 uM), A.baumannii (MIC=6 uM), and is weaky active against the Gram-positive S.aureus (MIC=100-250 uM). In Alytes obstetricans (Common midwife toad), this protein is Alyteserin-1c.